A 280-amino-acid chain; its full sequence is Cell division protein SepF (280 aa).

Residues 22 to 117 (DYVDDRAPRA…DDYPEDAYGE (96 aa)) form a disordered region. Composition is skewed to basic and acidic residues over residues 25 to 36 (DDRAPRASERGG) and 53 to 83 (RYGEDRYSADRFGPERFGAERFGPDRFGADR).

It belongs to the SepF family. In terms of assembly, homodimer. Interacts with FtsZ.

It localises to the cytoplasm. In terms of biological role, cell division protein that is part of the divisome complex and is recruited early to the Z-ring. Probably stimulates Z-ring formation, perhaps through the cross-linking of FtsZ protofilaments. Its function overlaps with FtsA. This Nocardia farcinica (strain IFM 10152) protein is Cell division protein SepF.